The following is a 509-amino-acid chain: Cytochrome P450 monooxygenase alt3 (509 aa).

Residues isoleucine 25–leucine 45 traverse the membrane as a helical segment. Cysteine 450 is a heme binding site.

It belongs to the cytochrome P450 family. The cofactor is heme.

It is found in the membrane. The protein operates within secondary metabolite biosynthesis. Functionally, cytochrome P450 monooxygenase; part of the gene cluster that mediates the biosynthesis of alternapyrone derivatives. Alternapyrone is a decaketide with octa-methylation from methionine on every C2 unit except the third unit. All the domains in the polyketide synthase alt5 are apparently involved in alternapyrone synthesis, that is, the 8 CMeT, 7 KR, 7 DH, and 4 ER reactions in the 9 KS-mediated condensation steps required for alternapyrone synthesis. the alternapyrone produced by alt5 might be intensively modified by cytochrome P450 monooxygenases alt1, alt2 and alt3 and FAD-dependent oxidoreductase alt4 present in the alt gene cluster. The protein is Cytochrome P450 monooxygenase alt3 of Alternaria solani.